The primary structure comprises 284 residues: Aspartate dehydrogenase domain-containing protein (284 aa).

This sequence belongs to the L-aspartate dehydrogenase family.

This chain is Aspartate dehydrogenase domain-containing protein (aspdh), found in Xenopus tropicalis (Western clawed frog).